Consider the following 36-residue polypeptide: Photosystem I reaction center subunit VIII (36 aa).

Residues 6-28 (LPSIFVPLVGLMFPAIAMASLSL) form a helical membrane-spanning segment.

Belongs to the PsaI family.

The protein localises to the plastid. It is found in the chloroplast thylakoid membrane. May help in the organization of the PsaL subunit. This Calycanthus floridus var. glaucus (Eastern sweetshrub) protein is Photosystem I reaction center subunit VIII.